The chain runs to 582 residues: Aspartate--tRNA ligase (582 aa).

The aspartate stretch occupies residues glutamine 198–lysine 201. Arginine 220 serves as a coordination point for L-aspartate. ATP contacts are provided by residues arginine 220–glutamate 222 and glutamine 229. Residue histidine 445 coordinates L-aspartate. Glutamate 479 provides a ligand contact to ATP. Arginine 486 contributes to the L-aspartate binding site. Glycine 531–arginine 534 is an ATP binding site.

This sequence belongs to the class-II aminoacyl-tRNA synthetase family. Type 1 subfamily. Homodimer.

It is found in the cytoplasm. The enzyme catalyses tRNA(Asp) + L-aspartate + ATP = L-aspartyl-tRNA(Asp) + AMP + diphosphate. Catalyzes the attachment of L-aspartate to tRNA(Asp) in a two-step reaction: L-aspartate is first activated by ATP to form Asp-AMP and then transferred to the acceptor end of tRNA(Asp). This Amoebophilus asiaticus (strain 5a2) protein is Aspartate--tRNA ligase.